The sequence spans 699 residues: Osmotic avoidance abnormal protein 3 (699 aa).

The Kinesin motor domain occupies 4-327 (SVRVAVRCRP…LRYANRAKNI (324 aa)). 87–94 (GQTGSGKT) is a binding site for ATP. Residues 339–523 (DALLREYQEE…EIEDLHGEFE (185 aa)) are a coiled coil.

This sequence belongs to the TRAFAC class myosin-kinesin ATPase superfamily. Kinesin family. Kinesin II subfamily. Expressed in an exclusive set of 26 chemosensory neurons whose dendritic endings are exposed to the external environment; six IL2 neurons of the inner labial sensilla, 8 pairs of amphid neurons in the head, and 2 pairs of phasmid neurons in the tail.

Its subcellular location is the cytoplasm. It is found in the cytoskeleton. The protein localises to the cell projection. It localises to the cilium. The protein resides in the cilium axoneme. Its subcellular location is the cilium basal body. Kinesin motor protein which is required for the anterograde intraflagellar transport (IFT) along the middle segment of the sensory neuron cilia together with the kinesin II motor complex (composed of klp-11, klp-20 and kap-1) and on its own, is required for IFT along the distal segment. In addition, regulates the length of cilia. May have a role during neurogenesis and axonal transport. This Caenorhabditis elegans protein is Osmotic avoidance abnormal protein 3.